A 649-amino-acid polypeptide reads, in one-letter code: Serine/threonine-protein kinase par-4 (649 aa).

The span at 1–11 (MEGPSSSSVPT) shows a compositional bias: polar residues. The segment at 1–132 (MEGPSSSSVP…DEEAETPEEQ (132 aa)) is disordered. A compositionally biased stretch (basic and acidic residues) spans 45-55 (NTEKMEKEKKP). 2 stretches are compositionally biased toward acidic residues: residues 64–77 (PDYD…GSCE) and 117–129 (DDME…AETP). In terms of domain architecture, Protein kinase spans 197–460 (YLWGGIIGTG…ISDVMQHPWF (264 aa)). ATP-binding positions include 203 to 211 (IGTGSYGKV) and K226. The active-site Proton acceptor is the D324. The tract at residues 548 to 649 (TLEKRPGDGP…CIFRSRTDSS (102 aa)) is disordered. Residues 597–609 (AVEVVEAVAAPEA) are compositionally biased toward low complexity.

The protein belongs to the protein kinase superfamily. CAMK Ser/Thr protein kinase family. LKB1 subfamily. Requires Mg(2+) as cofactor. Mn(2+) serves as cofactor.

It localises to the cytoplasm. The protein localises to the cell cortex. It catalyses the reaction L-seryl-[protein] + ATP = O-phospho-L-seryl-[protein] + ADP + H(+). The catalysed reaction is L-threonyl-[protein] + ATP = O-phospho-L-threonyl-[protein] + ADP + H(+). Required for cytoplasmic partitioning and asymmetric cell division in early embryogenesis. Phosphorylates and restricts the asymmetry effectors mex-5 and mex-6 to the anterior cytoplasm of the zygote and maintains these phosphorylations until fertilization. Phosphorylates and regulates aak-2 in response to oxidative stress. May also play a role in motility, behavioral response, regulation of lifespan and dauer formation through this pathway. The protein is Serine/threonine-protein kinase par-4 of Caenorhabditis briggsae.